Consider the following 87-residue polypeptide: MANIKSAKKRAIQSEKARKHNASRRSMMRTFIKKVYAAIEAGDKAAAQKAFNEMQPIVDRQAAKGLIHKNKAARHKANLTAQINKLA.

Residues 1 to 26 are disordered; sequence MANIKSAKKRAIQSEKARKHNASRRS.

The protein belongs to the bacterial ribosomal protein bS20 family.

In terms of biological role, binds directly to 16S ribosomal RNA. This Escherichia coli O17:K52:H18 (strain UMN026 / ExPEC) protein is Small ribosomal subunit protein bS20.